Here is a 407-residue protein sequence, read N- to C-terminus: Peptidase T (407 aa).

His-78 is a Zn(2+) binding site. Residue Asp-80 is part of the active site. Asp-139 serves as a coordination point for Zn(2+). The active-site Proton acceptor is Glu-173. Residues Glu-174, Asp-196, and His-378 each contribute to the Zn(2+) site.

This sequence belongs to the peptidase M20B family. Zn(2+) is required as a cofactor.

It is found in the cytoplasm. The catalysed reaction is Release of the N-terminal residue from a tripeptide.. In terms of biological role, cleaves the N-terminal amino acid of tripeptides. The protein is Peptidase T of Shewanella pealeana (strain ATCC 700345 / ANG-SQ1).